The chain runs to 206 residues: LexA repressor (206 aa).

A DNA-binding region (H-T-H motif) is located at residues 28–48; it reads RAEIATRLGFKSANAAEEHLK. Catalysis depends on for autocatalytic cleavage activity residues S123 and K160.

This sequence belongs to the peptidase S24 family. As to quaternary structure, homodimer.

It carries out the reaction Hydrolysis of Ala-|-Gly bond in repressor LexA.. Functionally, represses a number of genes involved in the response to DNA damage (SOS response), including recA and lexA. In the presence of single-stranded DNA, RecA interacts with LexA causing an autocatalytic cleavage which disrupts the DNA-binding part of LexA, leading to derepression of the SOS regulon and eventually DNA repair. In Shewanella sp. (strain ANA-3), this protein is LexA repressor.